The following is a 365-amino-acid chain: Fucose-specific lectin (365 aa).

A signal peptide spans 1–21; the sequence is MKLLHFTILLQVSLFPASSLA. Repeat copies occupy residues 22-79, 80-141, 142-206, 207-261, 262-309, and 310-365. The 6 X approximate tandem repeats stretch occupies residues 22–365; sequence QAGGNNTEVQ…RRGILAIPPA (344 aa). A glycan (N-linked (GlcNAc...) asparagine) is linked at Asn26. The beta-L-fucose site is built by Arg51, Glu63, and Trp70. Residues Asn76 and Asn85 are each glycosylated (N-linked (GlcNAc...) asparagine). Arg111 is a beta-L-fucose binding site. Asn118 is a glycosylation site (N-linked (GlcNAc...) asparagine). Beta-L-fucose contacts are provided by Glu123, Trp132, Arg164, Glu176, Trp201, and Arg231. Asn248 carries N-linked (GlcNAc...) asparagine glycosylation. Residues Arg283, Arg333, and Glu347 each coordinate beta-L-fucose.

Belongs to the fungal fucose-specific lectin family. In terms of assembly, homodimer.

Its subcellular location is the secreted. Probable L-fucose-binding lectin. This chain is Fucose-specific lectin, found in Arthroderma benhamiae (strain ATCC MYA-4681 / CBS 112371) (Trichophyton mentagrophytes).